We begin with the raw amino-acid sequence, 215 residues long: Nitrate/nitrite response regulator protein NarP (215 aa).

The 117-residue stretch at 8–124 folds into the Response regulatory domain; sequence QVMIVDDHPL…VLLEAIRAGA (117 aa). At aspartate 59 the chain carries 4-aspartylphosphate. An HTH luxR-type domain is found at 147–212; the sequence is EEDPFSVLTE…AATILFLQQR (66 aa). Residues 171–190 constitute a DNA-binding region (H-T-H motif); it reads NKQIASVLNISEQTVKVHIR.

Functionally, this protein activates the expression of the nitrate reductase (narGHJI) and formate dehydrogenase-N (fdnGHI) operons and represses the transcription of the fumarate reductase (frdABCD) operon in response to a nitrate/nitrite induction signal transmitted by either the NarX or NarQ proteins. The protein is Nitrate/nitrite response regulator protein NarP (narP) of Escherichia coli (strain K12).